Consider the following 1111-residue polypeptide: Phytochrome C (1111 aa).

Residues 213 to 393 enclose the GAF domain; that stretch reads NMLLLCDALV…VFGVQINKEA (181 aa). Position 318 (Cys-318) interacts with phytochromobilin. 2 PAS domains span residues 604–674 and 737–808; these read IVNE…LEGS and DYAR…TKLR. In terms of domain architecture, Histidine kinase spans 889 to 1111; the sequence is YLRHEVKDPE…FVILTEFPLI (223 aa).

It belongs to the phytochrome family. Homodimer. In terms of processing, contains one covalently linked phytochromobilin chromophore.

In terms of biological role, regulatory photoreceptor which exists in two forms that are reversibly interconvertible by light: the Pr form that absorbs maximally in the red region of the spectrum and the Pfr form that absorbs maximally in the far-red region. Photoconversion of Pr to Pfr induces an array of morphogenic responses, whereas reconversion of Pfr to Pr cancels the induction of those responses. Pfr controls the expression of a number of nuclear genes including those encoding the small subunit of ribulose-bisphosphate carboxylase, chlorophyll A/B binding protein, protochlorophyllide reductase, rRNA, etc. It also controls the expression of its own gene(s) in a negative feedback fashion. The sequence is that of Phytochrome C (PHYC) from Arabidopsis thaliana (Mouse-ear cress).